A 552-amino-acid polypeptide reads, in one-letter code: MDQSGVLLWVKAEPFLVGALQEPPPSKFSLHYLRKIATYVRTRATEGAYPHLYWPTWRHIACGKLQLAKDLAWLYFEMFDNLSVRTPEERLEWSEILSNCATEEEVEKQRSQLYVDTLQFLLFLYIQQLNRISLRTSLIGEEWPSRRSRPQSPSPAERPSCHNKNWNDYSHQAFVCNHLSELLELLLDPEQLTASFHSTHSSLLSRDAVTALSFLIEGTVSRAKKVYPLHQLALWQPLHVASGFSKSSKTFSLYKLEAWLRASLTTNPFGPSACLKSGKKLAWAHQVEGSTKRAKIACNAHMAPRLHRIVVMSQVYKQTLAKSSETLVGAHVRAHRCSESFIYLLSPLRSMTIEKCRNSTFVLGPVETTLHLHDCENLKVIAVCHRLSISSTTSCTFHIMTPSRPLILSGNQTVTFAPFHTHYPMLEDHMARTGLATVPNYWDNPMVVCKEGSVTSLFRLLPPSEFYIFVIPFEMEGDTAEIPGGLPSAYQKALAQREESIHIWQKTVKEARLTKEQRKQFQALVENKFYEWLVSTGHRQQLDSLVPTPAAS.

One can recognise a C-CAP/cofactor C-like domain in the interval 304 to 435 (PRLHRIVVMS…LEDHMARTGL (132 aa)).

This sequence belongs to the TBCC family. As to expression, expressed in brain and testis (at protein level).

It is found in the cytoplasm. The protein localises to the cytoskeleton. Its subcellular location is the microtubule organizing center. The protein resides in the centrosome. It localises to the spindle pole. Plays a role in the regulation of centrosome and Golgi apparatus positioning, with consequences on cell shape and cell migration. The protein is TBCC domain-containing protein 1 (Tbccd1) of Mus musculus (Mouse).